The following is a 351-amino-acid chain: UDP-3-O-acylglucosamine N-acyltransferase (351 aa).

His240 serves as the catalytic Proton acceptor.

This sequence belongs to the transferase hexapeptide repeat family. LpxD subfamily. As to quaternary structure, homotrimer.

The catalysed reaction is a UDP-3-O-[(3R)-3-hydroxyacyl]-alpha-D-glucosamine + a (3R)-hydroxyacyl-[ACP] = a UDP-2-N,3-O-bis[(3R)-3-hydroxyacyl]-alpha-D-glucosamine + holo-[ACP] + H(+). The protein operates within bacterial outer membrane biogenesis; LPS lipid A biosynthesis. Its function is as follows. Catalyzes the N-acylation of UDP-3-O-acylglucosamine using 3-hydroxyacyl-ACP as the acyl donor. Is involved in the biosynthesis of lipid A, a phosphorylated glycolipid that anchors the lipopolysaccharide to the outer membrane of the cell. This chain is UDP-3-O-acylglucosamine N-acyltransferase, found in Pseudomonas putida (strain ATCC 47054 / DSM 6125 / CFBP 8728 / NCIMB 11950 / KT2440).